The chain runs to 359 residues: MAAQRLAALHAAAPSAFSSTSSASHGRPAARSSTTALLPVALPRASATLRAAPSRLLPQEAKAAGSGRSVMCMASASASAASAAVASGAAELKAAREDIRELLKTTHCHPILVRLGWHDSGTYDKNIKEWPQRGGANGSLRFDVELKHGANAGLVNALKLVQPIKDKYPNISYADLFQLASATAIEEAGGPKIPMTYGRIDVTGPEQCPPEGKLPDAGPSAPADHLRKVFYRMGLDDKEIVVLSGAHTLGRSRPERSGWGKPETKYTKNGPGAPGGQSWTAEWLKFDNSYFKEIKEKRDQDLLVLPTDAALFEDPTFKVYAEKYAEDQEAFFKDYAGAHAKLSNLGAKFNPPEGFTLDG.

The transit peptide at 1–71 directs the protein to the chloroplast; the sequence is MAAQRLAALH…KAAGSGRSVM (71 aa). The Proton acceptor role is filled by His-118. His-247 is a binding site for heme b. Position 248 (Thr-248) interacts with K(+). A disordered region spans residues 251–277; that stretch reads RSRPERSGWGKPETKYTKNGPGAPGGQ. Residues 252-266 are compositionally biased toward basic and acidic residues; that stretch reads SRPERSGWGKPETKY. K(+) contacts are provided by Thr-280 and Asp-287.

It belongs to the peroxidase family. Ascorbate peroxidase subfamily. It depends on heme b as a cofactor. In terms of tissue distribution, expressed in roots, leaves, stems and flowers.

Its subcellular location is the plastid. The protein localises to the chloroplast stroma. The enzyme catalyses L-ascorbate + H2O2 = L-dehydroascorbate + 2 H2O. In terms of biological role, plays a key role in hydrogen peroxide removal. This is Probable L-ascorbate peroxidase 7, chloroplastic from Oryza sativa subsp. japonica (Rice).